A 729-amino-acid chain; its full sequence is Fatty acid oxidation complex subunit alpha (729 aa).

Positions 1 to 189 (MLYQGESLYL…KVGLVQAVVA (189 aa)) are enoyl-CoA hydratase/isomerase. Residue D296 participates in substrate binding. A 3-hydroxyacyl-CoA dehydrogenase region spans residues 311-729 (PVPQQAAVLG…HADVSHGQPA (419 aa)). Residues M324, D343, 400 to 402 (VVE), K407, and S429 contribute to the NAD(+) site. H450 (for 3-hydroxyacyl-CoA dehydrogenase activity) is an active-site residue. N453 lines the NAD(+) pocket. 2 residues coordinate substrate: N500 and Y660.

In the N-terminal section; belongs to the enoyl-CoA hydratase/isomerase family. It in the C-terminal section; belongs to the 3-hydroxyacyl-CoA dehydrogenase family. Heterotetramer of two alpha chains (FadB) and two beta chains (FadA).

It catalyses the reaction a (3S)-3-hydroxyacyl-CoA + NAD(+) = a 3-oxoacyl-CoA + NADH + H(+). The enzyme catalyses a (3S)-3-hydroxyacyl-CoA = a (2E)-enoyl-CoA + H2O. The catalysed reaction is a 4-saturated-(3S)-3-hydroxyacyl-CoA = a (3E)-enoyl-CoA + H2O. It carries out the reaction (3S)-3-hydroxybutanoyl-CoA = (3R)-3-hydroxybutanoyl-CoA. It catalyses the reaction a (3Z)-enoyl-CoA = a 4-saturated (2E)-enoyl-CoA. The enzyme catalyses a (3E)-enoyl-CoA = a 4-saturated (2E)-enoyl-CoA. It functions in the pathway lipid metabolism; fatty acid beta-oxidation. Its function is as follows. Involved in the aerobic and anaerobic degradation of long-chain fatty acids via beta-oxidation cycle. Catalyzes the formation of 3-oxoacyl-CoA from enoyl-CoA via L-3-hydroxyacyl-CoA. It can also use D-3-hydroxyacyl-CoA and cis-3-enoyl-CoA as substrate. The protein is Fatty acid oxidation complex subunit alpha of Pectobacterium atrosepticum (strain SCRI 1043 / ATCC BAA-672) (Erwinia carotovora subsp. atroseptica).